A 122-amino-acid polypeptide reads, in one-letter code: Large ribosomal subunit protein uL14 (122 aa).

The protein belongs to the universal ribosomal protein uL14 family. In terms of assembly, part of the 50S ribosomal subunit. Forms a cluster with proteins L3 and L19. In the 70S ribosome, L14 and L19 interact and together make contacts with the 16S rRNA in bridges B5 and B8.

Its function is as follows. Binds to 23S rRNA. Forms part of two intersubunit bridges in the 70S ribosome. The sequence is that of Large ribosomal subunit protein uL14 from Desulfotalea psychrophila (strain LSv54 / DSM 12343).